The chain runs to 154 residues: Deoxyuridine 5'-triphosphate nucleotidohydrolase (154 aa).

Residues 64–66, Asn77, 81–83, and Lys91 contribute to the substrate site; these read RSG and TID.

Belongs to the dUTPase family. In terms of assembly, homotrimer. The cofactor is Mg(2+).

It carries out the reaction dUTP + H2O = dUMP + diphosphate + H(+). The protein operates within pyrimidine metabolism; dUMP biosynthesis; dUMP from dCTP (dUTP route): step 2/2. This enzyme is involved in nucleotide metabolism: it produces dUMP, the immediate precursor of thymidine nucleotides and it decreases the intracellular concentration of dUTP so that uracil cannot be incorporated into DNA. The chain is Deoxyuridine 5'-triphosphate nucleotidohydrolase from Mycobacterium avium (strain 104).